The primary structure comprises 73 residues: Beta-defensin 39 (73 aa).

The N-terminal stretch at M1–G23 is a signal peptide. 3 disulfide bridges follow: C29-C58, C36-C51, and C41-C59.

This sequence belongs to the beta-defensin family.

The protein localises to the secreted. Functionally, has antibacterial activity. The polypeptide is Beta-defensin 39 (Defb39) (Rattus norvegicus (Rat)).